We begin with the raw amino-acid sequence, 2113 residues long: Ninein (2113 aa).

EF-hand domains lie at 8–43 and 42–77; these read QHEARLKELFDSFDTLGTGSLGQEELTDLCHVLCLE and LEDVGPVLQQTLLQDNLLGRVHFDQFKEALILILSR. At S152 the chain carries Phosphoserine. EF-hand domains lie at 182–217 and 219–252; these read WIEEKLQEVCEDLGITRDGHLNRKKLVSICEQYGLQ and VDGAMLEEVFLSLDPDGTMSVEDFFYGLFKTGKS. 245–252 serves as a coordination point for GTP; it reads GLFKTGKS. S269 bears the Phosphoserine mark. Residue 300–304 coordinates GTP; it reads DGMGQ. The region spanning 317–352 is the EF-hand 5 domain; sequence EGIENSQEILKALDFSLDGNINLTELTLALENELLV. Residues 358-570 are a coiled coil; the sequence is HQAALASFKA…YQAQGRVLRL (213 aa). Residue 420–423 coordinates GTP; it reads RKLD. A disordered region spans residues 578–599; sequence EELDGHSGGIEPDQGPGSEECN. Coiled coils occupy residues 620–926, 958–1008, 1175–1323, and 1425–1806; these read RDLC…ESQH, EQLA…STEI, EDTR…MEKV, and AALL…IDKD. The interval 798-1495 is important for interaction with CEP170; the sequence is EMETECNRRV…QDLQITCGEM (698 aa). Phosphoserine occurs at positions 1540 and 1826. Coiled-coil stretches lie at residues 1852 to 1910 and 1971 to 2093; these read VQNT…KEQS and REQF…IASL. Disordered stretches follow at residues 1899 to 1922 and 1988 to 2008; these read KRECEQSQKEQSPTSRKVGQMGSL and SQHLQEELENRTSETNTPQGN. Residues 1988 to 1999 are compositionally biased toward basic and acidic residues; that stretch reads SQHLQEELENRT.

In terms of assembly, homooligomer. Interacts with GSK3B/GSK3-beta via its C-terminal domain. Interacts with C14ORF166, such interaction may prevent its phosphorylation by GSK3B. Interacts with AUNIP (via N-terminus). Identified in a complex with AUNIP and AURKA. Interacts with CCDC120. Interacts (via C-terminus) with CEP250. Interacts with CEP170. Interacts (via N-terminus) with the gamma-tubulin ring complex component TUBGCP3. Interacts with gamma-tubulin. Isoform 4 does not interact with CEP170 or CEP250. Phosphorylated by AURKA/Aurora kinase A and PKA kinases but not CK2 or AURKB/Aurora kinase B. Widely expressed. Highly expressed in spleen, bone marrow and skin. Weakly expressed in liver and small intestine. Expressed in brain.

It is found in the cytoplasm. Its subcellular location is the cytoskeleton. The protein resides in the microtubule organizing center. It localises to the centrosome. The protein localises to the centriole. Its function is as follows. Centrosomal protein required for the positioning and anchorage of the microtubule minus-end in epithelial cells. May also act as a centrosome maturation factor. May play a role in microtubule nucleation, by recruiting the gamma-tubulin ring complex to the centrosome. Overexpression does not perturb nucleation or elongation of microtubules but suppresses release of microtubules. Required for centriole organization and microtubule anchoring at the mother centriole. The polypeptide is Ninein (Mus musculus (Mouse)).